We begin with the raw amino-acid sequence, 167 residues long: uncharacterized protein (167 aa).

This is an uncharacterized protein from Aquifex aeolicus (strain VF5).